The sequence spans 301 residues: Heme A synthase (301 aa).

The Cytoplasmic segment spans residues 1 to 7; the sequence is MHKGLKR. The helical transmembrane segment at 8–28 threads the bilayer; the sequence is LGVITSLGVLLVLIQGALVTN. At 29–56 the chain is on the extracellular side; it reads TGSGEGCGQTWPLCFGQVIPLDPPPETV. Cysteine 35 and cysteine 42 are joined by a disulfide. Residues 57–77 form a helical membrane-spanning segment; that stretch reads IEFSHRLVAGIVGMLVILMAI. The active site involves glutamate 58. Position 61 (histidine 61) interacts with heme o. At 78 to 92 the chain is on the cytoplasmic side; the sequence is WSWRRLKHMPETRFL. The chain crosses the membrane as a helical span at residues 93-113; that stretch reads AVISVFMIIFQGLLGAGAVVF. Residues 114-117 are Extracellular-facing; sequence GQSD. A helical transmembrane segment spans residues 118 to 138; it reads LIMALHFGFSALSFASVVLLT. Histidine 123 is a binding site for heme o. Residues 139-159 lie on the Cytoplasmic side of the membrane; sequence RLAFEDSNPQKQYAPIVSKAY. The chain crosses the membrane as a helical span at residues 160–180; sequence KGYVIFVAIYSYVAIYTGAYV. Over 181-215 the chain is Extracellular; it reads KHTNATLACSGFPLCNGQWVPDVFTEAIGVQLLHR. An intrachain disulfide couples cysteine 189 to cysteine 195. Heme b is bound at residue histidine 214. Residues 216–236 form a helical membrane-spanning segment; sequence SAAILLSLLLLVLFIWTVKTF. Topologically, residues 237–240 are cytoplasmic; that stretch reads RASR. A helical membrane pass occupies residues 241–261; that stretch reads VLVVCASLAMLLVIGQAASGV. The Extracellular segment spans residues 262–274; sequence AVVLTYNATLTLG. The chain crosses the membrane as a helical span at residues 275-295; it reads IFHALLISLLFTLLCYMVMLV. Position 277 (histidine 277) interacts with heme b. The Cytoplasmic segment spans residues 296-301; the sequence is TRHKAK.

The protein belongs to the COX15/CtaA family. Type 1 subfamily. As to quaternary structure, interacts with CtaB. Requires heme b as cofactor.

It is found in the cell membrane. The catalysed reaction is Fe(II)-heme o + 2 A + H2O = Fe(II)-heme a + 2 AH2. Its pathway is porphyrin-containing compound metabolism; heme A biosynthesis; heme A from heme O: step 1/1. Its function is as follows. Catalyzes the conversion of heme O to heme A by two successive hydroxylations of the methyl group at C8. The first hydroxylation forms heme I, the second hydroxylation results in an unstable dihydroxymethyl group, which spontaneously dehydrates, resulting in the formyl group of heme A. This is Heme A synthase from Shouchella clausii (strain KSM-K16) (Alkalihalobacillus clausii).